A 437-amino-acid polypeptide reads, in one-letter code: Membrane protein NfeD1b (437 aa).

A run of 5 helical transmembrane segments spans residues 2-22 (LQIK…LLGV), 231-251 (WLTN…GLTV), 253-273 (LFSP…LLFF), 288-308 (LLFI…GGII), and 316-336 (IIAS…SLLI).

The protein belongs to the NfeD family.

The protein resides in the cell membrane. In Bacillus subtilis (strain 168), this protein is Membrane protein NfeD1b.